The primary structure comprises 541 residues: Chlorophyllide a oxygenase, chloroplastic (541 aa).

A coiled-coil region spans residues 114-151 (LAREFKSIGTLRKELAELQEELAKAHNQVHLSETRVSS). Residues 178-192 (AECTSLAPSTSSASR) show a composition bias toward polar residues. Positions 178-208 (AECTSLAPSTSSASRVVNKKPPRRSLNVSGP) are disordered. The region spanning 220–320 (WYPVAFSSDL…CFEQEGMVWI (101 aa)) is the Rieske domain. Cys261, His263, Cys280, and His283 together coordinate [2Fe-2S] cluster. Asp359, Asp363, His366, and His371 together coordinate Fe cation.

In terms of tissue distribution, expressed in leaves and germinating seedlings, but not in sheaths and roots.

The protein resides in the plastid. The protein localises to the chloroplast membrane. It localises to the chloroplast thylakoid membrane. It carries out the reaction chlorophyllide a + 2 NADPH + 2 O2 + 2 H(+) = chlorophyllide b + 2 NADP(+) + 3 H2O. Catalyzes a two-step oxygenase reaction involved in the synthesis of chlorophyll b. Acts specifically on the non-esterified chlorophyllide a and not on chlorophyll a. This is Chlorophyllide a oxygenase, chloroplastic (CAO) from Oryza sativa subsp. japonica (Rice).